The following is a 143-amino-acid chain: Heat shock protein Hsp-16.48/Hsp-16.49 (143 aa).

The region spanning 35–140 is the sHSP domain; that stretch reads HNSFNFSDNI…SSRSIPINFV (106 aa).

This sequence belongs to the small heat shock protein (HSP20) family.

The chain is Heat shock protein Hsp-16.48/Hsp-16.49 (hsp-16.48) from Caenorhabditis elegans.